A 365-amino-acid polypeptide reads, in one-letter code: uncharacterized protein (365 aa).

6 helical membrane-spanning segments follow: residues 3–23 (MDTS…LYSI), 60–80 (IGII…LNII), 100–120 (VFLF…LIAI), 141–161 (SGIL…GDEF), 171–191 (AIAS…IPLL), and 280–300 (TALF…LALF).

To S.solfataricus C04034.

It is found in the cell membrane. This is an uncharacterized protein from Methanocaldococcus jannaschii (strain ATCC 43067 / DSM 2661 / JAL-1 / JCM 10045 / NBRC 100440) (Methanococcus jannaschii).